We begin with the raw amino-acid sequence, 1265 residues long: Protein diaphanous homolog 1 (1265 aa).

N-acetylmethionine is present on M1. Positions 1-12 (MEPSGGGLGPGR) are enriched in gly residues. 2 disordered regions span residues 1–42 (MEPS…FTLK) and 54–83 (SMRIKKEKEKPNSAHRNSSASYGDDPTAQS). Phosphoserine is present on S22. Over residues 54 to 65 (SMRIKKEKEKPN) the composition is skewed to basic and acidic residues. The span at 67-83 (AHRNSSASYGDDPTAQS) shows a compositional bias: polar residues. The GBD/FH3 domain maps to 84–449 (LQDISDDQVL…QIVLHKNGTD (366 aa)). Residues 474–568 (VEKSEAKATE…KKEMASLSAV (95 aa)) adopt a coiled-coil conformation. The interval 573–742 (SVSSSAAVPQ…PPPPGMGVPP (170 aa)) is disordered. Pro residues-rich tracts occupy residues 594–628 (IPPPPPPPLPGGAVPPPPPPPLPAGTGIPPPPPLP) and 645–742 (IPPP…GVPP). One can recognise an FH1 domain in the interval 625–757 (PPLPGGACIS…FGIPAAPVLP (133 aa)). The residue at position 761 (T761) is a Phosphothreonine. The region spanning 762-1164 (PKKVYKPEVQ…MRRAKLAKEK (403 aa)) is the FH2 domain. K1050 and K1096 each carry N6-acetyllysine. Phosphotyrosine is present on Y1114. A coiled-coil region spans residues 1141 to 1185 (AVKENQKRRETEEKMRRAKLAKEKAEKERLEKQQKREQLIDMNAE). The DAD domain occupies 1187–1215 (DETGVMDSLLEALQSGAAFRRKRGPRQVN). Residue S1247 is modified to Phosphoserine.

It belongs to the formin homology family. Diaphanous subfamily. Homodimer. Interacts with the GTP-bound form of RHOA. Interacts with RHOC, PFY1, MAPRE1, BAIAP2 and APC. Interacts with SCAI. Interacts with DCAF7, via FH2 domain. Interacts with NCDN. Interacts with OSBPL10, OSBPL2, VIM, TUBB and DYN1. Post-translationally, phosphorylation at Thr-761 is stimulated by cAMP and regulates stability, complex formation and mitochondrial movement. In terms of tissue distribution, expressed in testis. Present in Sertoli cells (at protein level).

It is found in the cell membrane. The protein localises to the cell projection. It localises to the ruffle membrane. Its subcellular location is the cytoplasm. The protein resides in the cytoskeleton. It is found in the microtubule organizing center. The protein localises to the centrosome. It localises to the spindle. Its subcellular location is the nucleus. Functionally, actin nucleation and elongation factor required for the assembly of F-actin structures, such as actin cables and stress fibers. Binds to the barbed end of the actin filament and slows down actin polymerization and depolymerization. Required for cytokinesis, and transcriptional activation of the serum response factor. DFR proteins couple Rho and Src tyrosine kinase during signaling and the regulation of actin dynamics. Functions as a scaffold protein for MAPRE1 and APC to stabilize microtubules and promote cell migration. Has neurite outgrowth promoting activity. Acts in a Rho-dependent manner to recruit PFY1 to the membrane. The MEMO1-RHOA-DIAPH1 signaling pathway plays an important role in ERBB2-dependent stabilization of microtubules at the cell cortex. It controls the localization of APC and CLASP2 to the cell membrane, via the regulation of GSK3B activity. In turn, membrane-bound APC allows the localization of the MACF1 to the cell membrane, which is required for microtubule capture and stabilization. Plays a role in the regulation of cell morphology and cytoskeletal organization. Required in the control of cell shape. Also acts as an actin nucleation and elongation factor in the nucleus by promoting nuclear actin polymerization inside the nucleus to drive serum-dependent SRF-MRTFA activity. The polypeptide is Protein diaphanous homolog 1 (Rattus norvegicus (Rat)).